The sequence spans 419 residues: Vacuolar aspartic protease (419 aa).

The N-terminal stretch at 1 to 22 (MQLSLSALTTVALALTSSLVDA) is a signal peptide. A Peptidase A1 domain is found at 104–415 (YFTEIQIGTP…DLDKNAVGLA (312 aa)). Residue Asp-122 is part of the active site. Cys-135 and Cys-140 are joined by a disulfide. N-linked (GlcNAc...) asparagine glycosylation occurs at Asn-157. Residue Asp-307 is part of the active site. Cys-341 and Cys-374 are oxidised to a cystine. N-linked (GlcNAc...) asparagine glycosylation is present at Asn-358. The short motif at 417-419 (TKV) is the Microbody targeting signal element.

It belongs to the peptidase A1 family.

The protein resides in the vacuole. The sequence is that of Vacuolar aspartic protease (APR1) from Candida albicans (Yeast).